Reading from the N-terminus, the 542-residue chain is Calcium-dependent protein kinase 7 (542 aa).

Gly2 carries the N-myristoyl glycine lipid modification. The region spanning 79–337 (YIIGRKLGQG…AHEVLRHPWI (259 aa)) is the Protein kinase domain. ATP is bound by residues 85–93 (LGQGQFGTT) and Lys108. Asp203 functions as the Proton acceptor in the catalytic mechanism. The tract at residues 343–373 (ATDQALDPSVISRLKQFSAMNKLKKLALRVI) is autoinhibitory domain. One can recognise an EF-hand 1 domain in the interval 380–415 (EEIAGLREMFKAVDTKNRGVITFGELREGLRRFGAE). Residues Asp393, Glu404, Asp431, Asn433, Thr435, Glu440, Asp465, Asp467, Ser469, Tyr471, Lys476, Asp499, Asn501, Asp503, Gln505, and Glu510 each coordinate Ca(2+). Positions 416–451 (FKDTEIGDIMEAAHNDNNVTIHYEEFIAATLPLNKI) constitute an EF-hand 2; degenerate domain. EF-hand domains are found at residues 452-487 (EREE…HNME) and 488-521 (DSLL…SNVG).

It belongs to the protein kinase superfamily. Ser/Thr protein kinase family. CDPK subfamily. In terms of tissue distribution, expressed in roots. Expressed in leaf sheaths.

The protein localises to the membrane. Its subcellular location is the cytoplasm. It is found in the cytosol. It catalyses the reaction L-seryl-[protein] + ATP = O-phospho-L-seryl-[protein] + ADP + H(+). The catalysed reaction is L-threonyl-[protein] + ATP = O-phospho-L-threonyl-[protein] + ADP + H(+). With respect to regulation, activated by calcium. Autophosphorylation may play an important role in the regulation of the kinase activity. Its function is as follows. May play a role in signal transduction pathways that involve calcium as a second messenger. May be a signaling component in the response to gibberellin and cold stress. In Oryza sativa subsp. japonica (Rice), this protein is Calcium-dependent protein kinase 7.